Here is a 475-residue protein sequence, read N- to C-terminus: Membrane-bound lytic murein transglycosylase F (475 aa).

A signal peptide spans 1 to 30 (MKKLKINYLFIGILTLLLAAALWPSIPWFG). Residues 31–269 (KTENHIAAIQ…RIEEKYLGHG (239 aa)) are non-LT domain. Residues 270–475 (DDFDYVDTRS…MKLAQDYPAV (206 aa)) form an LT domain region. Glu-314 is an active-site residue.

The protein in the N-terminal section; belongs to the bacterial solute-binding protein 3 family. This sequence in the C-terminal section; belongs to the transglycosylase Slt family.

The protein resides in the cell outer membrane. The catalysed reaction is Exolytic cleavage of the (1-&gt;4)-beta-glycosidic linkage between N-acetylmuramic acid (MurNAc) and N-acetylglucosamine (GlcNAc) residues in peptidoglycan, from either the reducing or the non-reducing ends of the peptidoglycan chains, with concomitant formation of a 1,6-anhydrobond in the MurNAc residue.. Functionally, murein-degrading enzyme that degrades murein glycan strands and insoluble, high-molecular weight murein sacculi, with the concomitant formation of a 1,6-anhydromuramoyl product. Lytic transglycosylases (LTs) play an integral role in the metabolism of the peptidoglycan (PG) sacculus. Their lytic action creates space within the PG sacculus to allow for its expansion as well as for the insertion of various structures such as secretion systems and flagella. The chain is Membrane-bound lytic murein transglycosylase F from Salmonella typhi.